A 572-amino-acid polypeptide reads, in one-letter code: MRGIFLIRSRLSIFRAPAVKCLRFSNVLPSLSNNCIVRLYMEPPVACVLPLGLCSMFSTSIADSEQVGFTRSNIEKDDESDIDLGCSISDELVSEDVGKISKLVKDCGSDRKELRNKLEECDVKPSNELVVEILSRVRNDWETAFTFFVWAGKQQGYVRSVREYHSMISILGKMRKFDTAWTLIDEMRKFSPSLVNSQTLLIMIRKYCAVHDVGKAINTFHAYKRFKLEMGIDDFQSLLSALCRYKNVSDAGHLIFCNKDKYPFDAKSFNIVLNGWCNVIGSPREAERVWMEMGNVGVKHDVVSYSSMISCYSKGGSLNKVLKLFDRMKKECIEPDRKVYNAVVHALAKASFVSEARNLMKTMEEEKGIEPNVVTYNSLIKPLCKARKTEEAKQVFDEMLEKGLFPTIRTYHAFMRILRTGEEVFELLAKMRKMGCEPTVETYIMLIRKLCRWRDFDNVLLLWDEMKEKTVGPDLSSYIVMIHGLFLNGKIEEAYGYYKEMKDKGMRPNENVEDMIQSWFSGKQYAEQRITDSKGEVNKGAIVKKSEREKNFLQQPEVRKVVREHGYSFWDE.

The transit peptide at Met-1 to Phe-57 directs the protein to the mitochondrion. 10 PPR repeats span residues Ser-160–Leu-194, Asn-196–Met-230, Gly-231–Lys-261, Asp-265–His-300, Asp-301–Pro-335, Asp-336–Pro-371, Asn-372–Pro-406, His-412–Pro-438, Thr-439–Pro-473, and Asp-474–Pro-508.

The protein belongs to the PPR family. P subfamily.

It localises to the mitochondrion. The sequence is that of Pentatricopeptide repeat-containing protein At5g15010, mitochondrial from Arabidopsis thaliana (Mouse-ear cress).